The chain runs to 360 residues: Phospho-N-acetylmuramoyl-pentapeptide-transferase (360 aa).

10 helical membrane-spanning segments follow: residues 27–47 (ILSVLTALFIAFWVGPIMIRM), 73–93 (TMGGALILVAIVISTLLWGDL), 97–117 (FVWITLGVLFVFGAVGWVDDW), 132–152 (WKYLWLSVGALGAGCALFFTA), 164–184 (FFKSVAINMGWFYIVLTYFVI), 199–219 (GLAIMPTVLVGGALGIFAYAG), 236–256 (AGELVIISAALCGAGLGFLWF), 263–283 (VFMGDVGALSLGAVLGVMAVI), 288–308 (IVLFIMGGVFVMETVSVMLQV), and 337–357 (KIIVRFWIITVILVLVGLATL).

Belongs to the glycosyltransferase 4 family. MraY subfamily. Requires Mg(2+) as cofactor.

It is found in the cell inner membrane. It carries out the reaction UDP-N-acetyl-alpha-D-muramoyl-L-alanyl-gamma-D-glutamyl-meso-2,6-diaminopimeloyl-D-alanyl-D-alanine + di-trans,octa-cis-undecaprenyl phosphate = di-trans,octa-cis-undecaprenyl diphospho-N-acetyl-alpha-D-muramoyl-L-alanyl-D-glutamyl-meso-2,6-diaminopimeloyl-D-alanyl-D-alanine + UMP. It functions in the pathway cell wall biogenesis; peptidoglycan biosynthesis. Functionally, catalyzes the initial step of the lipid cycle reactions in the biosynthesis of the cell wall peptidoglycan: transfers peptidoglycan precursor phospho-MurNAc-pentapeptide from UDP-MurNAc-pentapeptide onto the lipid carrier undecaprenyl phosphate, yielding undecaprenyl-pyrophosphoryl-MurNAc-pentapeptide, known as lipid I. The protein is Phospho-N-acetylmuramoyl-pentapeptide-transferase of Alcanivorax borkumensis (strain ATCC 700651 / DSM 11573 / NCIMB 13689 / SK2).